Consider the following 146-residue polypeptide: Ataxin-7-like protein 1 (146 aa).

2 disordered regions span residues 1–27 and 125–146; these read MTSE…QEGT and KRNA…QRQV. Polar residues predominate over residues 127-138; that stretch reads NASISWSGAESR.

The chain is Ataxin-7-like protein 1 (Atxn7l1) from Mus musculus (Mouse).